The chain runs to 686 residues: DNA ligase 1 (686 aa).

Residues 35 to 39, 84 to 85, and Glu119 contribute to the NAD(+) site; these read DFEYD and SL. The active-site N6-AMP-lysine intermediate is Lys121. 4 residues coordinate NAD(+): Arg142, Glu177, Lys293, and Lys317. Zn(2+)-binding residues include Cys411, Cys414, Cys429, and Cys434. Residues 602–686 enclose the BRCT domain; that stretch reads RVGEQLAGLT…LAEKGAPPLP (85 aa).

This sequence belongs to the NAD-dependent DNA ligase family. LigA subfamily. Mg(2+) serves as cofactor. Requires Mn(2+) as cofactor.

The enzyme catalyses NAD(+) + (deoxyribonucleotide)n-3'-hydroxyl + 5'-phospho-(deoxyribonucleotide)m = (deoxyribonucleotide)n+m + AMP + beta-nicotinamide D-nucleotide.. DNA ligase that catalyzes the formation of phosphodiester linkages between 5'-phosphoryl and 3'-hydroxyl groups in double-stranded DNA using NAD as a coenzyme and as the energy source for the reaction. It is essential for DNA replication and repair of damaged DNA. The polypeptide is DNA ligase 1 (Deinococcus deserti (strain DSM 17065 / CIP 109153 / LMG 22923 / VCD115)).